The following is a 451-amino-acid chain: Midnolin-B (451 aa).

Positions 20 to 94 constitute a Ubiquitin-like domain; the sequence is MNLNIQSTTG…LTLLPSVEAG (75 aa). 3 disordered regions span residues 187 to 254, 331 to 372, and 388 to 427; these read ASCT…RSRK, RNAK…QTEN, and QKRL…EGSL. Composition is skewed to low complexity over residues 190–205, 237–250, and 336–347; these read TPGS…TSST, STRG…SPSS, and TSPQSTGPQQTT. Positions 363–372 are enriched in basic and acidic residues; it reads SGDRLRQTEN. The span at 388–397 shows a compositional bias: basic residues; the sequence is QKRLRRKARR. The span at 413–426 shows a compositional bias: low complexity; sequence RTSSNSSTSSGEGS.

The protein resides in the nucleus. Its subcellular location is the cytoplasm. It localises to the cytosol. The protein localises to the nucleolus. Its function is as follows. Facilitates ubiquitin-independent proteasomal degradation of polycomb protein CBX4. Plays a role in inhibiting the activity of glucokinase GCK and both glucose-induced and basal insulin secretion. The protein is Midnolin-B (midn-b) of Xenopus laevis (African clawed frog).